Here is a 212-residue protein sequence, read N- to C-terminus: Ion-translocating oxidoreductase complex subunit G (212 aa).

A helical membrane pass occupies residues 9–29; that stretch reads ASLLGLFALLCTALVALVNQF. Thr-176 is subject to FMN phosphoryl threonine.

This sequence belongs to the RnfG family. The complex is composed of six subunits: RnfA, RnfB, RnfC, RnfD, RnfE and RnfG. FMN is required as a cofactor.

The protein resides in the cell inner membrane. Part of a membrane-bound complex that couples electron transfer with translocation of ions across the membrane. This is Ion-translocating oxidoreductase complex subunit G from Shewanella loihica (strain ATCC BAA-1088 / PV-4).